The primary structure comprises 239 residues: MMIEDDTGFVLHARAYRETSLLVEVLSAQHGRVGLLARGVSTAKGQVLRAALQPLQWIRFSAQQRGELAQLRGAEALDAAPRLVGQAMLAGFYLSELTLRLAPRQDPLPELYLAYGEARARLAVGAGLAWTLRRFERELLTALGLGFELDSASDGQPIDPAARYELDPQEGAQRLLSERGGERRAAATGSALLALAADEEPAAADLASLRLPMRRVLAHHLGPRGLKSWEMLEQLAPRR.

The protein belongs to the RecO family.

Functionally, involved in DNA repair and RecF pathway recombination. The protein is DNA repair protein RecO of Stenotrophomonas maltophilia (strain K279a).